The chain runs to 388 residues: Succinate--CoA ligase [ADP-forming] subunit beta (388 aa).

In terms of domain architecture, ATP-grasp spans 9 to 244 (KEIFRSMGVA…LEEEDPKEIE (236 aa)). ATP-binding positions include Lys-46, 53–55 (GRG), Glu-99, Cys-102, and Glu-107. Asn-199 and Asp-213 together coordinate Mg(2+). Substrate contacts are provided by residues Asn-264 and 321–323 (GIM).

Belongs to the succinate/malate CoA ligase beta subunit family. In terms of assembly, heterotetramer of two alpha and two beta subunits. Requires Mg(2+) as cofactor.

It catalyses the reaction succinate + ATP + CoA = succinyl-CoA + ADP + phosphate. The enzyme catalyses GTP + succinate + CoA = succinyl-CoA + GDP + phosphate. The protein operates within carbohydrate metabolism; tricarboxylic acid cycle; succinate from succinyl-CoA (ligase route): step 1/1. Its function is as follows. Succinyl-CoA synthetase functions in the citric acid cycle (TCA), coupling the hydrolysis of succinyl-CoA to the synthesis of either ATP or GTP and thus represents the only step of substrate-level phosphorylation in the TCA. The beta subunit provides nucleotide specificity of the enzyme and binds the substrate succinate, while the binding sites for coenzyme A and phosphate are found in the alpha subunit. The chain is Succinate--CoA ligase [ADP-forming] subunit beta from Staphylococcus haemolyticus (strain JCSC1435).